A 94-amino-acid chain; its full sequence is DNA-directed RNA polymerase subunit Rpo11 (94 aa).

The protein belongs to the archaeal Rpo11/eukaryotic RPB11/RPC19 RNA polymerase subunit family. In terms of assembly, part of the RNA polymerase complex.

It is found in the cytoplasm. The catalysed reaction is RNA(n) + a ribonucleoside 5'-triphosphate = RNA(n+1) + diphosphate. Its function is as follows. DNA-dependent RNA polymerase (RNAP) catalyzes the transcription of DNA into RNA using the four ribonucleoside triphosphates as substrates. The protein is DNA-directed RNA polymerase subunit Rpo11 of Natronomonas pharaonis (strain ATCC 35678 / DSM 2160 / CIP 103997 / JCM 8858 / NBRC 14720 / NCIMB 2260 / Gabara) (Halobacterium pharaonis).